Consider the following 273-residue polypeptide: Undecaprenyl-diphosphatase (273 aa).

6 helical membrane passes run 43–63 (IGNVFEVVIQLGAILAVCWEY), 82–102 (KFVLNLLIAFLPAAIVGVLLI), 109–129 (LFNPVAVACALVVGGLVILWA), 185–205 (TEFSFFLAIPIMFAATAYDVL), 214–234 (ADLPTFGTGFLFAFLSAFVAV), and 249–269 (FAWYRIVFGLIILGSWWLGWI).

It belongs to the UppP family.

The protein localises to the cell inner membrane. The catalysed reaction is di-trans,octa-cis-undecaprenyl diphosphate + H2O = di-trans,octa-cis-undecaprenyl phosphate + phosphate + H(+). In terms of biological role, catalyzes the dephosphorylation of undecaprenyl diphosphate (UPP). Confers resistance to bacitracin. The polypeptide is Undecaprenyl-diphosphatase (Laribacter hongkongensis (strain HLHK9)).